A 93-amino-acid chain; its full sequence is CRISPR-associated endoribonuclease Cas2 (93 aa).

A Mg(2+)-binding site is contributed by Asp13.

The protein belongs to the CRISPR-associated endoribonuclease Cas2 protein family. In terms of assembly, homodimer, forms a heterotetramer with a Cas1 homodimer. The cofactor is Mg(2+).

Functionally, CRISPR (clustered regularly interspaced short palindromic repeat), is an adaptive immune system that provides protection against mobile genetic elements (viruses, transposable elements and conjugative plasmids). CRISPR clusters contain sequences complementary to antecedent mobile elements and target invading nucleic acids. CRISPR clusters are transcribed and processed into CRISPR RNA (crRNA). Functions as a ssRNA-specific endoribonuclease. Involved in the integration of spacer DNA into the CRISPR cassette. This chain is CRISPR-associated endoribonuclease Cas2, found in Korarchaeum cryptofilum (strain OPF8).